Consider the following 413-residue polypeptide: CinA-like protein (413 aa).

It belongs to the CinA family.

This Geobacter sulfurreducens (strain ATCC 51573 / DSM 12127 / PCA) protein is CinA-like protein.